The following is a 393-amino-acid chain: Dual specificity mitogen-activated protein kinase kinase 1 (393 aa).

A disordered region spans residues 1–27; the sequence is MPKKKPTPIQLNPAPDGSAVNGTSSAE. Residues 68-361 enclose the Protein kinase domain; that stretch reads FEKISELGAG…LKQLMVHAFI (294 aa). ATP-binding positions include 74–82 and Lys97; that span reads LGAGNGGVV. The active-site Proton acceptor is Asp190. 2 positions are modified to phosphoserine; by RAF: Ser218 and Ser222. Residues 270–307 are RAF1-binding; it reads ELELMFGCQVEGDAAETPPRPRTPGRPLSSYGMDSRPP. Thr286 carries the phosphothreonine modification. Thr292 is modified (phosphothreonine; by MAPK1). The residue at position 298 (Ser298) is a Phosphoserine; by PAK.

Belongs to the protein kinase superfamily. STE Ser/Thr protein kinase family. MAP kinase kinase subfamily. In terms of assembly, found in a complex with at least BRAF, HRAS, MAP2K1, MAPK3/ERK1 and RGS14. Forms a heterodimer with MAP2K2/MEK2. Forms heterodimers with KSR2 which further dimerize to form tetramers. Interacts with KSR1 or KSR2 and BRAF; the interaction with KSR1 or KSR2 mediates KSR1-BRAF or KSR2-BRAF dimerization. Interacts with ARBB2, LAMTOR3, MAPK1/ERK2 and RAF1. Interacts with MAPK1/ERK2. Interacts with MORG1. Interacts with PPARG. Interacts with isoform 1 of VRK2. Interacts with SGK1. Interacts with BIRC6/bruce. Interacts with KAT7; the interaction promotes KAT7 phosphorylation. Interacts with RAF1 and NEK10; the interaction is required for ERK1/2-signaling pathway activation in response to UV irradiation. Interacts with TRAF3IP3. Interacts with MOS. Phosphorylation at Ser-218 and Ser-222 by MAP kinase kinase kinases (BRAF or MEKK1) positively regulates the kinase activity. Also phosphorylated at Thr-292 by MAPK1/ERK2 and at Ser-298 by PAK. MAPK1/ERK2 phosphorylation of Thr-292 occurs in response to cellular adhesion and leads to inhibition of Ser-298 phosphorylation by PAK. Autophosphorylated at Ser-218 and Ser-222, autophosphosphorylation is promoted by NEK10 following UV irradiation.

Its subcellular location is the cytoplasm. It localises to the cytoskeleton. The protein resides in the microtubule organizing center. The protein localises to the centrosome. It is found in the spindle pole body. Its subcellular location is the nucleus. It localises to the membrane. The catalysed reaction is L-seryl-[protein] + ATP = O-phospho-L-seryl-[protein] + ADP + H(+). It catalyses the reaction L-threonyl-[protein] + ATP = O-phospho-L-threonyl-[protein] + ADP + H(+). It carries out the reaction L-tyrosyl-[protein] + ATP = O-phospho-L-tyrosyl-[protein] + ADP + H(+). With respect to regulation, ras proteins such as HRAS mediate the activation of RAF proteins such as RAF1 or BRAF which in turn activate extracellular signal-regulated kinases (ERK) through MAPK (mitogen-activated protein kinases) and ERK kinases MAP2K1/MEK1 and MAP2K2/MEK2. Activation occurs through phosphorylation of Ser-218 and Ser-222. MAP2K1/MEK1 binds KSR1 or KSR2 releasing the inhibitory intramolecular interaction between KSR1 or KSR2 protein kinase and N-terminal domains. This allows KSR1 or KSR2 dimerization with BRAF leading to BRAF activation and phosphorylation of MAP2K1. MAP2K1/MEK1 is also the target of negative feed-back regulation by its substrate kinases, such as MAPK1/ERK2. These phosphorylate MAP2K1/MEK1 on Thr-292, thereby facilitating dephosphorylation of the activating residues Ser-218 and Ser-222. Inhibited by serine/threonine phosphatase 2A. Functionally, dual specificity protein kinase which acts as an essential component of the MAP kinase signal transduction pathway. Binding of extracellular ligands such as growth factors, cytokines and hormones to their cell-surface receptors activates RAS and this initiates RAF1 activation. RAF1 then further activates the dual-specificity protein kinases MAP2K1/MEK1 and MAP2K2/MEK2. Both MAP2K1/MEK1 and MAP2K2/MEK2 function specifically in the MAPK/ERK cascade, and catalyze the concomitant phosphorylation of a threonine and a tyrosine residue in a Thr-Glu-Tyr sequence located in the extracellular signal-regulated kinases MAPK3/ERK1 and MAPK1/ERK2, leading to their activation and further transduction of the signal within the MAPK/ERK cascade. Activates BRAF in a KSR1 or KSR2-dependent manner; by binding to KSR1 or KSR2 releases the inhibitory intramolecular interaction between KSR1 or KSR2 protein kinase and N-terminal domains which promotes KSR1 or KSR2-BRAF dimerization and BRAF activation. Depending on the cellular context, this pathway mediates diverse biological functions such as cell growth, adhesion, survival and differentiation, predominantly through the regulation of transcription, metabolism and cytoskeletal rearrangements. One target of the MAPK/ERK cascade is peroxisome proliferator-activated receptor gamma (PPARG), a nuclear receptor that promotes differentiation and apoptosis. MAP2K1/MEK1 has been shown to export PPARG from the nucleus. The MAPK/ERK cascade is also involved in the regulation of endosomal dynamics, including lysosome processing and endosome cycling through the perinuclear recycling compartment (PNRC), as well as in the fragmentation of the Golgi apparatus during mitosis. The sequence is that of Dual specificity mitogen-activated protein kinase kinase 1 (MAP2K1) from Pan troglodytes (Chimpanzee).